Consider the following 315-residue polypeptide: Tryptophan prenyltransferase ComQ (315 aa).

Aspartate 95 and aspartate 99 together coordinate Mg(2+).

This sequence belongs to the FPP/GGPP synthase family. Mg(2+) is required as a cofactor.

The protein localises to the cell membrane. It catalyses the reaction L-tryptophyl-[protein] + (2E,6E)-farnesyl diphosphate = (2S,3R)-3-farnesyl-2,3-dihydro-2,N(alpha)-cyclo-L-tryptophyl-[protein] + diphosphate. In terms of biological role, part of a major quorum-sensing system that regulates the development of genetic competence. Involved in the maturation of the competence pheromone ComX. Acts by catalyzing the transfer of a farnesyl group on the ComX pheromone. In vitro, can also catalyze the farnesylation of single tryptophan and tryptophan derivatives. The sequence is that of Tryptophan prenyltransferase ComQ from Bacillus subtilis subsp. natto (strain BEST195).